A 335-amino-acid polypeptide reads, in one-letter code: Beta-ketoacyl-[acyl-carrier-protein] synthase III (335 aa).

Residues C119 and H261 contribute to the active site. Positions 262–266 (QANQR) are ACP-binding. Residue N291 is part of the active site.

Belongs to the thiolase-like superfamily. FabH family. Homodimer.

It is found in the cytoplasm. The enzyme catalyses malonyl-[ACP] + acetyl-CoA + H(+) = 3-oxobutanoyl-[ACP] + CO2 + CoA. It functions in the pathway lipid metabolism; fatty acid biosynthesis. Functionally, catalyzes the condensation reaction of fatty acid synthesis by the addition to an acyl acceptor of two carbons from malonyl-ACP. Catalyzes the first condensation reaction which initiates fatty acid synthesis and may therefore play a role in governing the total rate of fatty acid production. Possesses both acetoacetyl-ACP synthase and acetyl transacylase activities. Its substrate specificity determines the biosynthesis of branched-chain and/or straight-chain of fatty acids. In Prochlorococcus marinus (strain MIT 9215), this protein is Beta-ketoacyl-[acyl-carrier-protein] synthase III.